A 526-amino-acid chain; its full sequence is Peptide chain release factor 3 (526 aa).

Residues 9-277 enclose the tr-type G domain; that stretch reads DKRRTFAIIS…GIVEWAPVPQ (269 aa). GTP-binding positions include 18–25, 86–90, and 140–143; these read SHPDAGKT, DTPGH, and NKLD.

It belongs to the TRAFAC class translation factor GTPase superfamily. Classic translation factor GTPase family. PrfC subfamily.

Its subcellular location is the cytoplasm. Increases the formation of ribosomal termination complexes and stimulates activities of RF-1 and RF-2. It binds guanine nucleotides and has strong preference for UGA stop codons. It may interact directly with the ribosome. The stimulation of RF-1 and RF-2 is significantly reduced by GTP and GDP, but not by GMP. The chain is Peptide chain release factor 3 from Shewanella pealeana (strain ATCC 700345 / ANG-SQ1).